A 204-amino-acid chain; its full sequence is Isochorismatase domain-containing protein 2 (204 aa).

It belongs to the isochorismatase family. As to quaternary structure, interacts with CDKN2A.

It localises to the cytoplasm. Its subcellular location is the nucleus. The sequence is that of Isochorismatase domain-containing protein 2 (ISOC2) from Bos taurus (Bovine).